The primary structure comprises 238 residues: Ribonuclease PH (238 aa).

Residues R86 and 124–126 (GTR) contribute to the phosphate site.

The protein belongs to the RNase PH family. As to quaternary structure, homohexameric ring arranged as a trimer of dimers.

The catalysed reaction is tRNA(n+1) + phosphate = tRNA(n) + a ribonucleoside 5'-diphosphate. Its function is as follows. Phosphorolytic 3'-5' exoribonuclease that plays an important role in tRNA 3'-end maturation. Removes nucleotide residues following the 3'-CCA terminus of tRNAs; can also add nucleotides to the ends of RNA molecules by using nucleoside diphosphates as substrates, but this may not be physiologically important. Probably plays a role in initiation of 16S rRNA degradation (leading to ribosome degradation) during starvation. The protein is Ribonuclease PH of Parvibaculum lavamentivorans (strain DS-1 / DSM 13023 / NCIMB 13966).